A 298-amino-acid polypeptide reads, in one-letter code: tRNA(Met) cytidine acetate ligase (298 aa).

ATP is bound by residues I6–Q19, G100, N157, and R182.

This sequence belongs to the TmcAL family.

The protein localises to the cytoplasm. The enzyme catalyses cytidine(34) in elongator tRNA(Met) + acetate + ATP = N(4)-acetylcytidine(34) in elongator tRNA(Met) + AMP + diphosphate. In terms of biological role, catalyzes the formation of N(4)-acetylcytidine (ac(4)C) at the wobble position of elongator tRNA(Met), using acetate and ATP as substrates. First activates an acetate ion to form acetyladenylate (Ac-AMP) and then transfers the acetyl group to tRNA to form ac(4)C34. This is tRNA(Met) cytidine acetate ligase from Mycoplasmopsis pulmonis (strain UAB CTIP) (Mycoplasma pulmonis).